A 452-amino-acid polypeptide reads, in one-letter code: Pup--protein ligase (452 aa).

Mg(2+) is bound at residue Glu9. An ATP-binding site is contributed by Arg53. Tyr55 provides a ligand contact to Mg(2+). Asp57 (proton acceptor) is an active-site residue. Glu63 lines the Mg(2+) pocket. ATP is bound by residues Thr66 and Trp419.

This sequence belongs to the Pup ligase/Pup deamidase family. Pup-conjugating enzyme subfamily.

It catalyses the reaction ATP + [prokaryotic ubiquitin-like protein]-L-glutamate + [protein]-L-lysine = ADP + phosphate + N(6)-([prokaryotic ubiquitin-like protein]-gamma-L-glutamyl)-[protein]-L-lysine.. It functions in the pathway protein degradation; proteasomal Pup-dependent pathway. Its pathway is protein modification; protein pupylation. Catalyzes the covalent attachment of the prokaryotic ubiquitin-like protein modifier Pup to the proteasomal substrate proteins, thereby targeting them for proteasomal degradation. This tagging system is termed pupylation. The ligation reaction involves the side-chain carboxylate of the C-terminal glutamate of Pup and the side-chain amino group of a substrate lysine. In Gordonia bronchialis (strain ATCC 25592 / DSM 43247 / BCRC 13721 / JCM 3198 / KCTC 3076 / NBRC 16047 / NCTC 10667) (Rhodococcus bronchialis), this protein is Pup--protein ligase.